The primary structure comprises 1041 residues: Importin-9 (1041 aa).

Ala2 is modified (N-acetylalanine). The region spanning Ala43–Glu119 is the Importin N-terminal domain. Residues Gln936–Gly967 are disordered. Residues Ser943–Gly964 are compositionally biased toward acidic residues.

It belongs to the importin beta family. As to quaternary structure, interacts with histones H2A, H2B, H3 and H4. The binding is coupled to RanGTP cycles. Interacts with AKIRIN2; promoting association with pre-assembled proteasomes. Associates with pre-assembled proteasomes; interaction is indirect and mediated via interaction with AKIRIN2. Interacts with PPP2R1A and PPP2R1B.

Its subcellular location is the cytoplasm. The protein resides in the nucleus. Nuclear transport receptor that mediates nuclear import of proteins, such as histones, proteasome and actin. Serves as receptor for nuclear localization signals (NLS) in cargo substrates. Is thought to mediate docking of the importin/substrate complex to the nuclear pore complex (NPC) through binding to nucleoporin and the complex is subsequently translocated through the pore by an energy requiring, Ran-dependent mechanism. At the nucleoplasmic side of the NPC, Ran binds to the importin, the importin/substrate complex dissociates and importin is re-exported from the nucleus to the cytoplasm where GTP hydrolysis releases Ran. The directionality of nuclear import is thought to be conferred by an asymmetric distribution of the GTP- and GDP-bound forms of Ran between the cytoplasm and nucleus. Mediates the import of pre-assembled proteasomes into the nucleus; AKIRIN2 acts as a molecular bridge between IPO9 and the proteasome complex. Mediates the nuclear import of histones H2A, H2B, H4 and H4. In addition to nuclear import, also acts as a chaperone for histones by preventing inappropriate non-nucleosomal interactions. Mediates the nuclear import of actin. The sequence is that of Importin-9 from Homo sapiens (Human).